An 836-amino-acid chain; its full sequence is Periostin (836 aa).

The signal sequence occupies residues 1 to 21 (MIPFLPMFSLLLLLIVNPINA). The region spanning 40–94 (GPNVCALQQILGTKKKYFSTCKNWYKKSICGQKTTVLYECCPGYMRMEGMKGCPA) is the EMI domain. Disulfide bonds link Cys44–Cys80, Cys69–Cys333, Cys79–Cys92, Cys208–Cys311, and Cys467–Cys472. An S-cysteinyl cysteine modification is found at Cys60. 4 consecutive FAS1 domains span residues 97–230 (PIDH…DRVL), 234–365 (GTSI…DQVL), 368–492 (DSAK…REII), and 496–628 (EKSL…DKLL). N-linked (GlcNAc...) asparagine glycosylation occurs at Asn599.

As to quaternary structure, homodimer. Interacts with BMP1 and fibronectin. Gamma-carboxylation is controversial. Gamma-carboxyglutamated; gamma-carboxyglutamate residues are formed by vitamin K dependent carboxylation; this may be required for calcium binding. According to a more recent report, does not contain vitamin K-dependent gamma-carboxyglutamate residues. Widely expressed with highest levels in aorta, stomach, lower gastrointestinal tract, placenta, uterus, thyroid tissue and breast. Expressed in the kidney. Expressed in the lung. Up-regulated in epithelial ovarian tumors. Not expressed in normal ovaries. Also highly expressed at the tumor periphery of lung carcinoma tissue but not within the tumor. Overexpressed in breast cancers.

The protein resides in the golgi apparatus. It localises to the secreted. It is found in the extracellular space. Its subcellular location is the extracellular matrix. Induces cell attachment and spreading and plays a role in cell adhesion. Enhances incorporation of BMP1 in the fibronectin matrix of connective tissues, and subsequent proteolytic activation of lysyl oxidase LOX. The sequence is that of Periostin (POSTN) from Homo sapiens (Human).